Consider the following 222-residue polypeptide: Cytochrome b6-f complex iron-sulfur subunit, chloroplastic (222 aa).

The transit peptide at 1–49 directs the protein to the chloroplast; that stretch reads MASTALSTASNPTQLCRTRASSLCKPVKGLGFGRERIPRNITCMAGSIS. A helical membrane pass occupies residues 66–86; the sequence is LLGAISLPTFGMLVPYGSFLV. The 97-residue stretch at 109-205 folds into the Rieske domain; the sequence is VEDWLKTHGP…ADVDDGKVVF (97 aa). Positions 151, 153, 169, and 172 each coordinate [2Fe-2S] cluster. Cys-156 and Cys-171 form a disulfide bridge.

It belongs to the Rieske iron-sulfur protein family. As to quaternary structure, the 4 large subunits of the cytochrome b6-f complex are cytochrome b6, subunit IV (17 kDa polypeptide, petD), cytochrome f and the Rieske protein, while the 4 small subunits are petG, petL, petM and petN. The complex functions as a dimer. [2Fe-2S] cluster is required as a cofactor.

The protein resides in the plastid. The protein localises to the chloroplast thylakoid membrane. The catalysed reaction is 2 oxidized [plastocyanin] + a plastoquinol + 2 H(+)(in) = 2 reduced [plastocyanin] + a plastoquinone + 4 H(+)(out). Functionally, component of the cytochrome b6-f complex, which mediates electron transfer between photosystem II (PSII) and photosystem I (PSI), cyclic electron flow around PSI, and state transitions. The sequence is that of Cytochrome b6-f complex iron-sulfur subunit, chloroplastic (petC) from Triticum aestivum (Wheat).